The primary structure comprises 226 residues: V-type proton ATPase subunit E 1 (226 aa).

Ala-2 is modified (N-acetylalanine). Tyr-56 is modified (phosphotyrosine).

This sequence belongs to the V-ATPase E subunit family. In terms of assembly, V-ATPase is a heteromultimeric enzyme made up of two complexes: the ATP-hydrolytic V1 complex and the proton translocation V0 complex. The V1 complex consists of three catalytic AB heterodimers that form a heterohexamer, three peripheral stalks each consisting of EG heterodimers, one central rotor including subunits D and F, and the regulatory subunits C and H. The proton translocation complex V0 consists of the proton transport subunit a, a ring of proteolipid subunits c9c'', rotary subunit d, subunits e and f, and the accessory subunits ATP6AP1/Ac45 and ATP6AP2/PRR. Interacts with RABL2/RABL2A; binds preferentially to GTP-bound RABL2. Interacts with ALDOC. Interacts with RAB11B. As to expression, kidney; localizes to early distal nephron, encompassing thick ascending limbs and distal convoluted tubules (at protein level). Ubiquitous. High expression in the skin.

The protein resides in the apical cell membrane. The protein localises to the cytoplasmic vesicle. It is found in the secretory vesicle. Its subcellular location is the synaptic vesicle membrane. It localises to the clathrin-coated vesicle membrane. In terms of biological role, subunit of the V1 complex of vacuolar(H+)-ATPase (V-ATPase), a multisubunit enzyme composed of a peripheral complex (V1) that hydrolyzes ATP and a membrane integral complex (V0) that translocates protons. V-ATPase is responsible for acidifying and maintaining the pH of intracellular compartments and in some cell types, is targeted to the plasma membrane, where it is responsible for acidifying the extracellular environment. The sequence is that of V-type proton ATPase subunit E 1 (ATP6V1E1) from Homo sapiens (Human).